The sequence spans 367 residues: S-adenosylmethionine decarboxylase proenzyme 3 (367 aa).

Residues Glu-9 and Glu-12 contribute to the active site. Residue Ser-69 is the Schiff-base intermediate with substrate; via pyruvic acid of the active site. At Ser-69 the chain carries Pyruvic acid (Ser); by autocatalysis. The active-site Proton donor; for catalytic activity is Cys-83. Residues Ser-234 and His-247 each act as proton acceptor; for processing activity in the active site.

This sequence belongs to the eukaryotic AdoMetDC family. Pyruvate is required as a cofactor. Post-translationally, is synthesized initially as an inactive proenzyme. Formation of the active enzyme involves a self-maturation process in which the active site pyruvoyl group is generated from an internal serine residue via an autocatalytic post-translational modification. Two non-identical subunits are generated from the proenzyme in this reaction, and the pyruvate is formed at the N-terminus of the alpha chain, which is derived from the carboxyl end of the proenzyme. The post-translation cleavage follows an unusual pathway, termed non-hydrolytic serinolysis, in which the side chain hydroxyl group of the serine supplies its oxygen atom to form the C-terminus of the beta chain, while the remainder of the serine residue undergoes an oxidative deamination to produce ammonia and the pyruvoyl group blocking the N-terminus of the alpha chain.

It carries out the reaction S-adenosyl-L-methionine + H(+) = S-adenosyl 3-(methylsulfanyl)propylamine + CO2. It functions in the pathway amine and polyamine biosynthesis; S-adenosylmethioninamine biosynthesis; S-adenosylmethioninamine from S-adenosyl-L-methionine: step 1/1. The sequence is that of S-adenosylmethionine decarboxylase proenzyme 3 (SAMDC3) from Brassica juncea (Indian mustard).